The primary structure comprises 960 residues: Anoctamin-1 (960 aa).

Residues 1–333 (MRVPEKYSTL…FGEKVGLYFA (333 aa)) are Cytoplasmic-facing. Residues 92 to 115 (TRSVRQDQPLPGKGSPVDAGSPEV) are disordered. Serine 196 carries the phosphoserine modification. Residues 334–354 (WLGAYTQMLIPASIVGVIVFL) form a helical membrane-spanning segment. Residues 355 to 406 (YGCATVDENIPSMEMCDQRYNITMCPLCDKTCSYWKMSSACATARASHLFDN) are Extracellular-facing. 4 disulfides stabilise this stretch: cysteine 370–cysteine 395, cysteine 379–cysteine 836, cysteine 382–cysteine 386, and cysteine 625–cysteine 630. Residues 407–427 (PATVFFSVFMALWAATFMEHW) traverse the membrane as a helical segment. Glutamate 425 is a binding site for Ca(2+). Residues 428–493 (KRKQMRLNYR…RDRFPAYFTN (66 aa)) are Cytoplasmic-facing. The chain crosses the membrane as a helical span at residues 494-514 (LVSIIFMIAVTFAIVLGVIIY). Over 515-542 (RISTAAALAMNSSPSVRSNIRVTVTATA) the chain is Extracellular. A helical transmembrane segment spans residues 543-563 (VIINLVVIILLDEVYGCIARW). At 564 to 581 (LTKIEVPKTEKSFEERLT) the chain is on the cytoplasmic side. A helical transmembrane segment spans residues 582 to 602 (FKAFLLKFVNSYTPIFYVAFF). The Extracellular segment spans residues 603 to 631 (KGRFVGRPGDYVYIFRSFRMEECAPGGCL). Residues 632-652 (MELCIQLSIIMLGKQLIQNNL) traverse the membrane as a helical segment. Asparagine 651, glutamate 654, glutamate 702, glutamate 705, glutamate 734, and aspartate 738 together coordinate Ca(2+). The Cytoplasmic segment spans residues 653–699 (FEIGIPKMKKFIRYLKLRRQSPSDREEYVKRKQRYEVDFNLEPFAGL). 2 helical membrane passes run 700-720 (TPEYMEMIIQFGFVTLFVASF) and 721-741 (PLAPLFALLNNIIEIRLDAKK). The Cytoplasmic portion of the chain corresponds to 742 to 758 (FVTELRRPVAIRAKDIG). A helical transmembrane segment spans residues 759–779 (IWYNILRGVGKLAVIINAFVI). Topologically, residues 780-866 (SFTSDFIPRL…FWAVLAARLA (87 aa)) are extracellular. Asparagine 806 carries an N-linked (GlcNAc...) asparagine glycan. Residues 867–887 (FVIVFQNLVMFMSDFVDWVIP) form a helical membrane-spanning segment. Aspartate 883 and aspartate 888 together coordinate Ca(2+). Over 888–960 (DIPKDISQQI…PSYEYHGDAL (73 aa)) the chain is Cytoplasmic. The tract at residues 928–960 (PRDVPCNNHSPTTHPEAGDGSPVPSYEYHGDAL) is disordered.

The protein belongs to the anoctamin family. As to quaternary structure, homodimer. Interacts with CFTR. Interacts with TRPV4. In terms of tissue distribution, expressed at the apical surface of the vomeronasal epithelium (at protein level). Expressed in the lateral and septal nasal glands (at protein level). Highly expressed in pulmonary bronchiole epithelial cells, pancreatic and submandibular gland acinar cells, kidney proximal tubule, all retinal cell layers, most sensory cells of dorsal root ganglia, Leydig cells and spermatocytes (at protein level). In the dorsal root ganglia, detected in small-diameter nociceptive neurons and in larger myelinated neurons (at protein level). In the dorsal root ganglia, expressed in MrgprA3-positive neurons (at protein level). In the developing brain, highly expressed in the ventricular zone and subventricular zone at 12.5 dpc and 14.5 dpc where it is detected in radial glial cells but not in neurons with expression dramatically decreased at P1 (at protein level). Highly expressed in the endometrial stroma (at protein level). In taste buds of the vallate papillae, expressed in the apical region of type I taste cells (at protein level). In the kidney, expressed in the collecting duct (at protein level). In the retina, strongly expressed in the outer and inner plexiform layers, weakly expressed in some somata in the inner nuclear layer and ganglion cell layer and not expressed in the outer nuclear layer (at protein level). Expressed in various retinal neurons including rod bipolar cells (at protein level). Expressed in eye, brain, myometrium and endometrium with higher levels in endometrium than myometrium in estrus and day 18 pregnant mice. Not detected in uterine smooth muscle cells. Expressed at high levels in the thyroid gland and gastrointestinal muscles.

Its subcellular location is the apical cell membrane. The protein localises to the presynapse. The catalysed reaction is chloride(in) = chloride(out). ATP and calmodulin are essential for its activation. Channel activity is inhibited by CFTR protein and by chloride inhibitors such as niflumic acid (NFA) and 4,4'-diisothiocyanatostilbene-2,2'-disulfonic acid (DIDS). Activated by heat with activation seen at temperatures above 44 degrees Celsius. Activated by BDNF in radial glial cells. In terms of biological role, calcium-activated chloride channel (CaCC). Plays a role in transepithelial anion transport and smooth muscle contraction. Required for the normal functioning of the interstitial cells of Cajal (ICCs) which generate electrical pacemaker activity in gastrointestinal smooth muscles. Acts as a major contributor to basal and stimulated chloride conductance in airway epithelial cells and plays an important role in tracheal cartilage development. Required for CFTR activation by enhancing endoplasmic reticulum Ca(2+) store release and is also required for CFTR membrane expression. Required for basal and ATP-dependent mucus secretion in airways and intestine, probably by controlling exocytosis of mucus-filled granules by providing Ca(2+) to an apical signaling compartment. Contributes to airway mucus expression induced by interleukins IL3 and IL8 and by the asthma-associated protein CLCA1 and is required for expression of mucin MUC5AC. However, was shown in another study not to be required for MUC5AC expression. Plays a role in the propagation of Ca(2+) waves in Kolliker's organ in the cochlea and contributes to the refinement of auditory brainstem circuitries prior to hearing onset. In vomeronasal sensory neurons, modulates spontaneous firing patterns in the absence of stimuli as well as the firing pattern of pheromone-evoked activity. Responsible for calcium-activated chloride channel activity in type I taste cells of the vallate papillae. Acts as a heat sensor in nociceptive neurons. In dorsal root ganglion neurons, plays a role in mediating non-histaminergic Mas-related G-protein coupled receptor (MRGPR)-dependent itching, acting as a downstream effector of MRGPRs. In the developing brain, required for the Ca(2+)-dependent process extension of radial glial cells. The polypeptide is Anoctamin-1 (Ano1) (Mus musculus (Mouse)).